The chain runs to 131 residues: MDPRLPAWALVLLGPALVFALGPAPTPEMREKLCGHHFVRALVRVCGGPRWSTEARRPATGGDRELLQWLERRHLLHGLVADSNLTLGPGLQPLPQTSHHHRHHRAAATNPARYCCLSGCTQQDLLTLCPY.

The first 20 residues, 1–20 (MDPRLPAWALVLLGPALVFA), serve as a signal peptide directing secretion. 3 disulfide bridges follow: C34/C116, C46/C129, and C115/C120. Positions 58-104 (PATGGDRELLQWLERRHLLHGLVADSNLTLGPGLQPLPQTSHHHRHH) are cleaved as a propeptide — c peptide like.

This sequence belongs to the insulin family. In terms of assembly, heterodimer of a B chain and an A chain linked by two disulfide bonds. In terms of tissue distribution, expressed in prenatal and postnatal Leydig cells. Found as well in the corpus luteum, trophoblast, fetal membranes and breast.

It is found in the secreted. Functionally, seems to play a role in testicular function. May be a trophic hormone with a role in testicular descent in fetal life. Is a ligand for LGR8 receptor. This is Insulin-like 3 (INSL3) from Homo sapiens (Human).